A 255-amino-acid chain; its full sequence is Indole-3-glycerol phosphate synthase (255 aa).

Belongs to the TrpC family.

It carries out the reaction 1-(2-carboxyphenylamino)-1-deoxy-D-ribulose 5-phosphate + H(+) = (1S,2R)-1-C-(indol-3-yl)glycerol 3-phosphate + CO2 + H2O. The protein operates within amino-acid biosynthesis; L-tryptophan biosynthesis; L-tryptophan from chorismate: step 4/5. The sequence is that of Indole-3-glycerol phosphate synthase from Shouchella clausii (strain KSM-K16) (Alkalihalobacillus clausii).